We begin with the raw amino-acid sequence, 319 residues long: NADH-ubiquinone oxidoreductase chain 1 (319 aa).

A run of 8 helical transmembrane segments spans residues 5 to 25 (TINS…LTLM), 72 to 92 (LLIS…TPIP), 102 to 122 (LGLL…LWAG), 146 to 166 (VTLG…TMQL), 173 to 193 (FTWL…STLA), 225 to 245 (FFLT…ILFI), 254 to 274 (ELFL…FLWI), and 295 to 315 (LPLT…TSGI).

The protein belongs to the complex I subunit 1 family.

It localises to the mitochondrion inner membrane. The catalysed reaction is a ubiquinone + NADH + 5 H(+)(in) = a ubiquinol + NAD(+) + 4 H(+)(out). In terms of biological role, core subunit of the mitochondrial membrane respiratory chain NADH dehydrogenase (Complex I) that is believed to belong to the minimal assembly required for catalysis. Complex I functions in the transfer of electrons from NADH to the respiratory chain. The immediate electron acceptor for the enzyme is believed to be ubiquinone. In Varanus flavescens (Yellow monitor), this protein is NADH-ubiquinone oxidoreductase chain 1 (MT-ND1).